The primary structure comprises 277 residues: Putative protease slr0021 (277 aa).

S85 (nucleophile) is an active-site residue. K137 acts as the Proton donor/acceptor in catalysis.

It belongs to the peptidase S49 family.

The sequence is that of Putative protease slr0021 from Synechocystis sp. (strain ATCC 27184 / PCC 6803 / Kazusa).